Reading from the N-terminus, the 372-residue chain is Alanine racemase (372 aa).

The active-site Proton acceptor; specific for D-alanine is K33. K33 carries the post-translational modification N6-(pyridoxal phosphate)lysine. Position 131 (R131) interacts with substrate. Y261 serves as the catalytic Proton acceptor; specific for L-alanine. M309 is a substrate binding site.

This sequence belongs to the alanine racemase family. Requires pyridoxal 5'-phosphate as cofactor.

The catalysed reaction is L-alanine = D-alanine. It participates in amino-acid biosynthesis; D-alanine biosynthesis; D-alanine from L-alanine: step 1/1. Functionally, catalyzes the interconversion of L-alanine and D-alanine. May also act on other amino acids. The chain is Alanine racemase (alr) from Salinispora arenicola (strain CNS-205).